The chain runs to 650 residues: Growth hormone receptor (650 aa).

An N-terminal signal peptide occupies residues 1–24; that stretch reads MDLCQVFLTLALAVTSSTFSGSEA. Residues 25 to 273 are Extracellular-facing; sequence TPATLGKASP…ILEACEEDIQ (249 aa). Intrachain disulfides connect C56–C66 and C109–C120. The N-linked (GlcNAc...) asparagine glycan is linked to N123. The cysteines at positions 134 and 148 are disulfide-linked. Residues 159 to 262 enclose the Fibronectin type-III domain; it reads PPIGLNWTLL…EVLRVIFPQT (104 aa). N-linked (GlcNAc...) asparagine glycosylation is found at N164, N169, and N208. Residues 248 to 252 carry the WSXWS motif motif; sequence YSEFS. A helical transmembrane segment spans residues 274–297; it reads FPWFLIIIFGIFGVAVMLFVVIFS. Over 298–650 the chain is Cytoplasmic; sequence KQQRIKMLIL…STDQLNKIMQ (353 aa). The required for JAK2 binding stretch occupies residues 303–390; sequence KMLILPPVPV…HEKSAGILGA (88 aa). The Box 1 motif signature appears at 306–314; that stretch reads ILPPVPVPK. Positions 349 to 358 match the UbE motif motif; the sequence is DSWVEFIELD. Residue S350 is modified to Phosphoserine. The tract at residues 466 to 486 is disordered; it reads KPQPLLSSETEATHQLASTPM. A compositionally biased stretch (polar residues) spans 470–486; sequence LLSSETEATHQLASTPM. 2 positions are modified to phosphotyrosine: Y498 and Y606.

This sequence belongs to the type I cytokine receptor family. Type 1 subfamily. As to quaternary structure, on growth hormone (GH) binding, forms homodimers and binds JAK2 via a box 1-containing domain. Post-translationally, the soluble form (GHBP) is produced by phorbol ester-promoted proteolytic cleavage at the cell surface (shedding) by ADAM17/TACE. Shedding is inhibited by growth hormone (GH) binding to the receptor probably due to a conformational change in GHR rendering the receptor inaccessible to ADAM17. In terms of processing, on GH binding, phosphorylated on tyrosine residues in the cytoplasmic domain by JAK2. Ubiquitinated by the ECS(SOCS2) complex following ligand-binding and phosphorylation by JAK2, leading to its degradation by the proteasome. Regulation by the ECS(SOCS2) complex acts as a negative feedback loop of growth hormone receptor signaling. Ubiquitination is not sufficient for GHR internalization. As to expression, expressed in all tissues tested including, liver, heart, adipose tissue, mammary gland, testes, ovary, brain, kidney and muscle. Highest levels in liver.

It localises to the cell membrane. The protein localises to the secreted. Receptor for pituitary gland growth hormone (GH1) involved in regulating postnatal body growth. On ligand binding, couples to the JAK2/STAT5 pathway. In terms of biological role, the soluble form (GHBP) acts as a reservoir of growth hormone in plasma and may be a modulator/inhibitor of GH signaling. In Mus musculus (Mouse), this protein is Growth hormone receptor (Ghr).